The sequence spans 88 residues: Small ribosomal subunit protein uS17 (88 aa).

Belongs to the universal ribosomal protein uS17 family. In terms of assembly, part of the 30S ribosomal subunit.

One of the primary rRNA binding proteins, it binds specifically to the 5'-end of 16S ribosomal RNA. This chain is Small ribosomal subunit protein uS17, found in Levilactobacillus brevis (strain ATCC 367 / BCRC 12310 / CIP 105137 / JCM 1170 / LMG 11437 / NCIMB 947 / NCTC 947) (Lactobacillus brevis).